The chain runs to 556 residues: 2-succinyl-5-enolpyruvyl-6-hydroxy-3-cyclohexene-1-carboxylate synthase (556 aa).

Belongs to the TPP enzyme family. MenD subfamily. Homodimer. Mg(2+) serves as cofactor. Mn(2+) is required as a cofactor. It depends on thiamine diphosphate as a cofactor.

It carries out the reaction isochorismate + 2-oxoglutarate + H(+) = 5-enolpyruvoyl-6-hydroxy-2-succinyl-cyclohex-3-ene-1-carboxylate + CO2. It functions in the pathway quinol/quinone metabolism; 1,4-dihydroxy-2-naphthoate biosynthesis; 1,4-dihydroxy-2-naphthoate from chorismate: step 2/7. Its pathway is quinol/quinone metabolism; menaquinone biosynthesis. Catalyzes the thiamine diphosphate-dependent decarboxylation of 2-oxoglutarate and the subsequent addition of the resulting succinic semialdehyde-thiamine pyrophosphate anion to isochorismate to yield 2-succinyl-5-enolpyruvyl-6-hydroxy-3-cyclohexene-1-carboxylate (SEPHCHC). This chain is 2-succinyl-5-enolpyruvyl-6-hydroxy-3-cyclohexene-1-carboxylate synthase, found in Staphylococcus haemolyticus (strain JCSC1435).